Reading from the N-terminus, the 259-residue chain is Ubiquitin-conjugating enzyme E2 J2 (259 aa).

The Cytoplasmic segment spans residues 1-226 (MSSTSSKRAP…AGLQQANRHH (226 aa)). One can recognise a UBC core domain in the interval 12 to 162 (TATQRLKQDY…DKVFCELFPE (151 aa)). Cys94 functions as the Glycyl thioester intermediate in the catalytic mechanism. The chain crosses the membrane as a helical; Anchor for type IV membrane protein span at residues 227 to 247 (GLLGGALANLFVIVGFAAFAY). The Lumenal segment spans residues 248 to 259 (TVKYVLRSIAQE).

It belongs to the ubiquitin-conjugating enzyme family. In terms of processing, auto-ubiquitinated.

The protein resides in the endoplasmic reticulum membrane. The enzyme catalyses S-ubiquitinyl-[E1 ubiquitin-activating enzyme]-L-cysteine + [E2 ubiquitin-conjugating enzyme]-L-cysteine = [E1 ubiquitin-activating enzyme]-L-cysteine + S-ubiquitinyl-[E2 ubiquitin-conjugating enzyme]-L-cysteine.. It participates in protein modification; protein ubiquitination. In terms of biological role, catalyzes the covalent attachment of ubiquitin to other proteins. Seems to function in the selective degradation of misfolded membrane proteins from the endoplasmic reticulum (ERAD). In cooperation with the GATOR2 complex, catalyzes 'Lys-6'-linked ubiquitination of NPRL2. This Homo sapiens (Human) protein is Ubiquitin-conjugating enzyme E2 J2 (UBE2J2).